The primary structure comprises 359 residues: 4-hydroxy-3-methylbut-2-en-1-yl diphosphate synthase (flavodoxin) (359 aa).

Cysteine 264, cysteine 267, cysteine 299, and glutamate 306 together coordinate [4Fe-4S] cluster.

Belongs to the IspG family. Requires [4Fe-4S] cluster as cofactor.

The enzyme catalyses (2E)-4-hydroxy-3-methylbut-2-enyl diphosphate + oxidized [flavodoxin] + H2O + 2 H(+) = 2-C-methyl-D-erythritol 2,4-cyclic diphosphate + reduced [flavodoxin]. It functions in the pathway isoprenoid biosynthesis; isopentenyl diphosphate biosynthesis via DXP pathway; isopentenyl diphosphate from 1-deoxy-D-xylulose 5-phosphate: step 5/6. Its function is as follows. Converts 2C-methyl-D-erythritol 2,4-cyclodiphosphate (ME-2,4cPP) into 1-hydroxy-2-methyl-2-(E)-butenyl 4-diphosphate. The chain is 4-hydroxy-3-methylbut-2-en-1-yl diphosphate synthase (flavodoxin) from Mycoplasmoides gallisepticum (strain R(low / passage 15 / clone 2)) (Mycoplasma gallisepticum).